A 313-amino-acid polypeptide reads, in one-letter code: MRLVTLAPAKVNLVLRVGPVRADGYHDLRTLMVPLDLGDRVDVRVSARRGPVRCTVPGRPELHGPENLAARAAEAFRRRFGVDRAVSIRIEKRTPVTAGLGGGSSDAAAVLRCLARAFRVRDRAALAALALEIGSDVPFFLGPGPAWAAGRGERLSPADVPPLDLVLVYPADPSLAIRAGDAYRWLDEARAGGPQAPRRLGRPGRWRPSLLGNDLQAPCVARKPALQALLGLLVGAGATAAIMSGSGPTVFGVFPGRGAARGAALAIQGRAKGGAAGVQVLLARTVRRHPRVSPWRSPRSASSPSTRRSSRPT.

K10 is an active-site residue. 95 to 105 contributes to the ATP binding site; the sequence is PVTAGLGGGSS. D136 is an active-site residue. The interval 289–313 is disordered; the sequence is HPRVSPWRSPRSASSPSTRRSSRPT. A compositionally biased stretch (low complexity) spans 292 to 307; that stretch reads VSPWRSPRSASSPSTR.

Belongs to the GHMP kinase family. IspE subfamily.

It carries out the reaction 4-CDP-2-C-methyl-D-erythritol + ATP = 4-CDP-2-C-methyl-D-erythritol 2-phosphate + ADP + H(+). The protein operates within isoprenoid biosynthesis; isopentenyl diphosphate biosynthesis via DXP pathway; isopentenyl diphosphate from 1-deoxy-D-xylulose 5-phosphate: step 3/6. Functionally, catalyzes the phosphorylation of the position 2 hydroxy group of 4-diphosphocytidyl-2C-methyl-D-erythritol. This is 4-diphosphocytidyl-2-C-methyl-D-erythritol kinase from Anaeromyxobacter dehalogenans (strain 2CP-C).